Consider the following 465-residue polypeptide: uncharacterized protein (465 aa).

Over residues 87 to 112 the composition is skewed to polar residues; it reads KTSQQIDSSPPQTPTTSNGSMMTRRQ. 2 disordered regions span residues 87–169 and 201–244; these read KTSQ…SYDD and EGYI…NNIF. Residues 113-139 are compositionally biased toward low complexity; it reads NANNAISSNNNTNTNVTNGSSSNTSLN. The span at 141–157 shows a compositional bias: acidic residues; sequence GDEEQEEEEEEENDEDS. Residues 217-244 show a composition bias toward low complexity; that stretch reads NRNNNNNNINKNNNNNINNNNNNNNNIF.

This is an uncharacterized protein from Dictyostelium discoideum (Social amoeba).